A 474-amino-acid polypeptide reads, in one-letter code: Methylenetetrahydrofolate--tRNA-(uracil-5-)-methyltransferase TrmFO (474 aa).

9–14 (GGGLAG) contributes to the FAD binding site.

Belongs to the MnmG family. TrmFO subfamily. FAD serves as cofactor.

It localises to the cytoplasm. The catalysed reaction is uridine(54) in tRNA + (6R)-5,10-methylene-5,6,7,8-tetrahydrofolate + NADH + H(+) = 5-methyluridine(54) in tRNA + (6S)-5,6,7,8-tetrahydrofolate + NAD(+). It carries out the reaction uridine(54) in tRNA + (6R)-5,10-methylene-5,6,7,8-tetrahydrofolate + NADPH + H(+) = 5-methyluridine(54) in tRNA + (6S)-5,6,7,8-tetrahydrofolate + NADP(+). Its function is as follows. Catalyzes the folate-dependent formation of 5-methyl-uridine at position 54 (M-5-U54) in all tRNAs. In Methylorubrum extorquens (strain PA1) (Methylobacterium extorquens), this protein is Methylenetetrahydrofolate--tRNA-(uracil-5-)-methyltransferase TrmFO.